The sequence spans 330 residues: Delta-aminolevulinic acid dehydratase (330 aa).

Residues cysteine 122, cysteine 124, histidine 131, and cysteine 132 each contribute to the Zn(2+) site. The Schiff-base intermediate with substrate role is filled by lysine 199. At lysine 199 the chain carries N6-succinyllysine. Arginine 209 contributes to the 5-aminolevulinate binding site. Residue serine 215 is modified to Phosphoserine. Residue arginine 221 coordinates 5-aminolevulinate. Cysteine 223 serves as a coordination point for Zn(2+). Residue lysine 252 is the Schiff-base intermediate with substrate of the active site. Lysine 252 carries the N6-succinyllysine modification. A 5-aminolevulinate-binding site is contributed by serine 279.

This sequence belongs to the ALAD family. In terms of assembly, homooctamer; active form. Homohexamer; low activity form. Requires Zn(2+) as cofactor.

It is found in the cytoplasm. Its subcellular location is the cytosol. It carries out the reaction 2 5-aminolevulinate = porphobilinogen + 2 H2O + H(+). Its pathway is porphyrin-containing compound metabolism; protoporphyrin-IX biosynthesis; coproporphyrinogen-III from 5-aminolevulinate: step 1/4. Its activity is regulated as follows. Can alternate between a fully active homooctamer and a low-activity homohexamer. A bound magnesium ion may promote the assembly of the fully active homooctamer. The magnesium-binding site is absent in the low-activity homohexamer. Inhibited by compounds that favor the hexameric state. Inhibited by divalent lead ions. The lead ions partially displace the zinc cofactor. Its function is as follows. Catalyzes an early step in the biosynthesis of tetrapyrroles. Binds two molecules of 5-aminolevulinate per subunit, each at a distinct site, and catalyzes their condensation to form porphobilinogen. In Pongo abelii (Sumatran orangutan), this protein is Delta-aminolevulinic acid dehydratase (ALAD).